The primary structure comprises 191 residues: Fe/S biogenesis protein NfuA (191 aa).

[4Fe-4S] cluster-binding residues include cysteine 149 and cysteine 152.

This sequence belongs to the NfuA family. As to quaternary structure, homodimer. [4Fe-4S] cluster serves as cofactor.

Its function is as follows. Involved in iron-sulfur cluster biogenesis. Binds a 4Fe-4S cluster, can transfer this cluster to apoproteins, and thereby intervenes in the maturation of Fe/S proteins. Could also act as a scaffold/chaperone for damaged Fe/S proteins. This Photorhabdus laumondii subsp. laumondii (strain DSM 15139 / CIP 105565 / TT01) (Photorhabdus luminescens subsp. laumondii) protein is Fe/S biogenesis protein NfuA.